Consider the following 288-residue polypeptide: Bifunctional protein FolD (288 aa).

NADP(+) contacts are provided by residues 166–168 (GRS), Ser-191, and Ile-232.

It belongs to the tetrahydrofolate dehydrogenase/cyclohydrolase family. In terms of assembly, homodimer.

It catalyses the reaction (6R)-5,10-methylene-5,6,7,8-tetrahydrofolate + NADP(+) = (6R)-5,10-methenyltetrahydrofolate + NADPH. It carries out the reaction (6R)-5,10-methenyltetrahydrofolate + H2O = (6R)-10-formyltetrahydrofolate + H(+). The protein operates within one-carbon metabolism; tetrahydrofolate interconversion. Functionally, catalyzes the oxidation of 5,10-methylenetetrahydrofolate to 5,10-methenyltetrahydrofolate and then the hydrolysis of 5,10-methenyltetrahydrofolate to 10-formyltetrahydrofolate. The chain is Bifunctional protein FolD from Rickettsia canadensis (strain McKiel).